Here is a 557-residue protein sequence, read N- to C-terminus: Dihydroxy-acid dehydratase (557 aa).

Asp-78 is a binding site for Mg(2+). A [2Fe-2S] cluster-binding site is contributed by Cys-119. The Mg(2+) site is built by Asp-120 and Lys-121. Lys-121 is modified (N6-carboxylysine). Cys-192 serves as a coordination point for [2Fe-2S] cluster. Mg(2+) is bound at residue Glu-442. Ser-468 serves as the catalytic Proton acceptor.

Belongs to the IlvD/Edd family. As to quaternary structure, homodimer. Requires [2Fe-2S] cluster as cofactor. Mg(2+) is required as a cofactor.

It carries out the reaction (2R)-2,3-dihydroxy-3-methylbutanoate = 3-methyl-2-oxobutanoate + H2O. The enzyme catalyses (2R,3R)-2,3-dihydroxy-3-methylpentanoate = (S)-3-methyl-2-oxopentanoate + H2O. Its pathway is amino-acid biosynthesis; L-isoleucine biosynthesis; L-isoleucine from 2-oxobutanoate: step 3/4. It functions in the pathway amino-acid biosynthesis; L-valine biosynthesis; L-valine from pyruvate: step 3/4. In terms of biological role, functions in the biosynthesis of branched-chain amino acids. Catalyzes the dehydration of (2R,3R)-2,3-dihydroxy-3-methylpentanoate (2,3-dihydroxy-3-methylvalerate) into 2-oxo-3-methylpentanoate (2-oxo-3-methylvalerate) and of (2R)-2,3-dihydroxy-3-methylbutanoate (2,3-dihydroxyisovalerate) into 2-oxo-3-methylbutanoate (2-oxoisovalerate), the penultimate precursor to L-isoleucine and L-valine, respectively. The polypeptide is Dihydroxy-acid dehydratase (Bacillus cereus (strain AH820)).